We begin with the raw amino-acid sequence, 41 residues long: Augerpeptide hhe6.1 (41 aa).

3 disulfides stabilise this stretch: cysteine 11–cysteine 32, cysteine 18–cysteine 35, and cysteine 31–cysteine 40.

Expressed by the venom duct.

The protein resides in the secreted. In Hastula hectica (Sea snail), this protein is Augerpeptide hhe6.1.